A 196-amino-acid polypeptide reads, in one-letter code: Recombination protein RecR (196 aa).

Residues 55 to 70 (CELCGNLESESPCSIC) form a C4-type zinc finger. Residues 78 to 173 (DIVCVVEEIT…KLSFLAHGIP (96 aa)) form the Toprim domain.

Belongs to the RecR family.

Functionally, may play a role in DNA repair. It seems to be involved in an RecBC-independent recombinational process of DNA repair. It may act with RecF and RecO. This chain is Recombination protein RecR, found in Neorickettsia sennetsu (strain ATCC VR-367 / Miyayama) (Ehrlichia sennetsu).